The primary structure comprises 578 residues: Arginine--tRNA ligase (578 aa).

The 'HIGH' region motif lies at 127–137 (PNLAKEMHVGH).

It belongs to the class-I aminoacyl-tRNA synthetase family. In terms of assembly, monomer.

It localises to the cytoplasm. It carries out the reaction tRNA(Arg) + L-arginine + ATP = L-arginyl-tRNA(Arg) + AMP + diphosphate. The protein is Arginine--tRNA ligase of Pseudomonas fluorescens (strain SBW25).